The chain runs to 360 residues: Ubiquitin carboxyl-terminal hydrolase MIY1 (360 aa).

The active-site Nucleophile is Cys28. His216 functions as the Proton acceptor in the catalytic mechanism. Positions 317–360 (KRKIHSHKKNSEIHAPVKKDKFKRRSSLLNAKASEKEKSECVVM) are disordered. 2 stretches are compositionally biased toward basic and acidic residues: residues 325 to 335 (KNSEIHAPVKK) and 349 to 360 (ASEKEKSECVVM).

It belongs to the MINDY deubiquitinase family. FAM63 subfamily.

Its subcellular location is the cytoplasm. The enzyme catalyses Thiol-dependent hydrolysis of ester, thioester, amide, peptide and isopeptide bonds formed by the C-terminal Gly of ubiquitin (a 76-residue protein attached to proteins as an intracellular targeting signal).. In terms of biological role, hydrolase that can specifically remove 'Lys-48'-linked conjugated ubiquitin from proteins. Has endodeubiquitinase activity. The chain is Ubiquitin carboxyl-terminal hydrolase MIY1 from Saccharomyces cerevisiae (strain ATCC 204508 / S288c) (Baker's yeast).